A 177-amino-acid polypeptide reads, in one-letter code: Ribulose bisphosphate carboxylase small subunit, chloroplastic 3 (177 aa).

The N-terminal 56 residues, 1–56 (MASSMMASTAAAVARAGPAQSSMVPFNACRSSVPFPATRKANNNLSTLPGNGGRVS), are a transit peptide targeting the chloroplast.

This sequence belongs to the RuBisCO small chain family. In terms of assembly, heterohexadecamer of 8 large and 8 small subunits.

The protein resides in the plastid. It is found in the chloroplast. In terms of biological role, ruBisCO catalyzes two reactions: the carboxylation of D-ribulose 1,5-bisphosphate, the primary event in carbon dioxide fixation, as well as the oxidative fragmentation of the pentose substrate. Both reactions occur simultaneously and in competition at the same active site. Although the small subunit is not catalytic it is essential for maximal activity. The sequence is that of Ribulose bisphosphate carboxylase small subunit, chloroplastic 3 from Lemna gibba (Swollen duckweed).